Consider the following 224-residue polypeptide: UPF0758 protein HEAR2468 (224 aa).

The MPN domain occupies 102–224 (ALNSPQAVKQ…VYSFAEQGQL (123 aa)). The Zn(2+) site is built by His-173, His-175, and Asp-186. The short motif at 173-186 (HNHPSGTPEPSAAD) is the JAMM motif element.

It belongs to the UPF0758 family.

This Herminiimonas arsenicoxydans protein is UPF0758 protein HEAR2468.